A 475-amino-acid chain; its full sequence is Putative F-box protein At1g46840 (475 aa).

The F-box domain occupies 25–71 (TYVLEKLHIDLVIEILSRLSAKSIAICRCVSKQWNSLLVSQDFVESF). A compositionally biased stretch (low complexity) spans 423-433 (SSYSTTRSYKS). Residues 423–475 (SSYSTTRSYKSSGKRCSDRSIGEDEQDDIGEKRGDQAAERRERSTKRGKHEVH) form a disordered region. The segment covering 451–464 (IGEKRGDQAAERRE) has biased composition (basic and acidic residues). The span at 465-475 (RSTKRGKHEVH) shows a compositional bias: basic residues.

The protein is Putative F-box protein At1g46840 of Arabidopsis thaliana (Mouse-ear cress).